Here is a 324-residue protein sequence, read N- to C-terminus: AKTTPPSVYPLAPGSAAQTNSMVTLGCLVKGYFPEPVTVTWNSGSLSSGVHTFPAVLQSDLYTLSSSVTVPSSPRPSETVTCNVAHPASSTKVDKKIVPRDCGCKPCICTVPEVSSVFIFPPKPKDVLTITLTPKVTCVVVDISKDDPEVQFSWFVDDVEVHTAQTQPREEQFNSTFRSVSELPIMHQDWLNGKEFKCRVNSAAFPAPIEKTISKTKGRPKAPQVYTIPPPKEQMAKDKVSLTCMITDFFPEDITVEWQWNGQPAENYKNTQPIMNTNGSYFVYSKLNVQKSNWEAGNTFTCSVLHEGLHNHHTEKSLSHSPGK.

The segment at 1-97 (AKTTPPSVYP…ASSTKVDKKI (97 aa)) is CH1. A disulfide bond links cysteine 27 and cysteine 82. The segment at 98–110 (VPRDCGCKPCICT) is hinge. A CH2 region spans residues 111–217 (VPEVSSVFIF…PIEKTISKTK (107 aa)). 2 disulfide bridges follow: cysteine 138-cysteine 198 and cysteine 244-cysteine 302. A glycan (N-linked (GlcNAc...) asparagine) is linked at asparagine 174. A CH3 region spans residues 218–324 (GRPKAPQVYT…EKSLSHSPGK (107 aa)).

It is found in the secreted. In Mus musculus (Mouse), this protein is Ig gamma-1 chain C region secreted form (Ighg1).